Here is a 663-residue protein sequence, read N- to C-terminus: Cytochrome bo(3) ubiquinol oxidase subunit 1 (663 aa).

Residues 1–16 (MFGKLSLDAVPFHEPI) lie on the Periplasmic side of the membrane. A helical transmembrane segment spans residues 17–35 (VMVTIAGIILGGLALVGLI). At 36–52 (TYFGKWTYLWKEWLTSV) the chain is on the cytoplasmic side. Residues 53–80 (DHKRLGIMYIIVAIVMLLRGFADAIMMR) form a helical membrane-spanning segment. The ubiquinone-8 site is built by Arg71 and Asp75. Topologically, residues 81–95 (SQQALASAGEAGFLP) are periplasmic. The chain crosses the membrane as a helical span at residues 96–132 (PHHYDQIFTAHGVIMIFFVAMPFVIGLMNLVVPLQIG). His98 lines the ubiquinone-8 pocket. His106 provides a ligand contact to heme b. Over 133 to 137 (ARDVA) the chain is Cytoplasmic. A helical transmembrane segment spans residues 138–161 (FPFLNNLSFWFTVVGVILVNVSLG). Topologically, residues 162-184 (VGEFAQTGWLAYPPLSGIEYSPG) are periplasmic. Trp170 contacts heme b. A helical transmembrane segment spans residues 185-215 (VGVDYWIWSLQLSGIGTTLTGINFFVTILKM). Topologically, residues 216 to 224 (RAPGMTMFK) are cytoplasmic. The helical transmembrane segment at 225 to 260 (MPVFTWASLCANVLIIASFPILTVTVALLTLDRYLG) threads the bilayer. Topologically, residues 261–270 (THFFTNDMGG) are periplasmic. Residues 271-307 (NMMMYINLIWAWGHPEVYILILPVFGVFSEIAATFSR) form a helical membrane-spanning segment. Residue His284 participates in Cu(2+) binding. Residues 284 to 288 (HPEVY) constitute a cross-link (1'-histidyl-3'-tyrosine (His-Tyr)). Residue Tyr288 coordinates Fe(II)-heme o. Residues 308 to 311 (KRLF) are Cytoplasmic-facing. A helical membrane pass occupies residues 312-326 (GYTSLVWATVCITVL). Over 327-340 (SFIVWLHHFFTMGA) the chain is Periplasmic. The Cu(2+) site is built by His333 and His334. Residues 341–369 (GANVNAFFGITTMIIAIPTGVKIFNWLFT) traverse the membrane as a helical segment. Topologically, residues 370-377 (MYQGRIVF) are cytoplasmic. The helical transmembrane segment at 378 to 409 (HSAMLWTIGFIVTFSVGGMTGVLLAVPGADFV) threads the bilayer. Topologically, residues 410 to 412 (LHN) are periplasmic. Fe(II)-heme o is bound by residues His411 and His419. The chain crosses the membrane as a helical span at residues 413–445 (SLFLIAHFHNVIIGGVVFGCFAGMTYWWPKAFG). Residue His421 coordinates heme b. Residues 446–448 (FKL) lie on the Cytoplasmic side of the membrane. The chain crosses the membrane as a helical span at residues 449 to 477 (NETWGKRAFWFWIIGFFVAFMPLYALGFM). Residues 478 to 489 (GMTRRLSQQIDP) are Periplasmic-facing. Heme b contacts are provided by Arg481 and Arg482. A helical transmembrane segment spans residues 490–521 (QFHTMLMIAASGAVLIALGILCLVIQMYVSIR). The Cytoplasmic segment spans residues 522–587 (DRDQNRDLTG…DHYEEIHMPK (66 aa)). A helical membrane pass occupies residues 588–606 (NSGAGIVIAAFSTIFGFAM). Topologically, residues 607–613 (IWHIWWL) are periplasmic. The helical transmembrane segment at 614 to 632 (AIVGFAGMIITWIVKSFDE) threads the bilayer. Topologically, residues 633–663 (DVDYYVPVAEIEKLENQHFDEITKAGLKNGN) are cytoplasmic.

Belongs to the heme-copper respiratory oxidase family. As to quaternary structure, the cytochrome bo(3) ubiquinol oxidase complex is a heterooctamer of two A chains, two B chains, two C chains and two D chains. Cu(2+) is required as a cofactor. Heme b serves as cofactor. The cofactor is Fe(II)-heme o.

Its subcellular location is the cell inner membrane. The enzyme catalyses 2 a ubiquinol + O2 + n H(+)(in) = 2 a ubiquinone + 2 H2O + n H(+)(out). In terms of biological role, cytochrome bo(3) ubiquinol oxidase is the terminal enzyme in the aerobic respiratory chain of E.coli that predominates when cells are grown at high aeration. Catalyzes the four-electron reduction of O2 to water, using a ubiquinol as a membrane soluble electron donor for molecular oxygen reduction; ubiquinol-8 is the natural substrate for E.coli. Has proton pump activity across the membrane in addition to electron transfer, pumping 2 protons/electron and generating a proton motive force. All the redox centers of this enzyme complex are located within the largest subunit, subunit I. Protons are probably pumped via D- and K- channels found in this subunit. This is Cytochrome bo(3) ubiquinol oxidase subunit 1 (cyoB) from Escherichia coli O157:H7.